The chain runs to 140 residues: Large ribosomal subunit protein bL17 (140 aa).

Belongs to the bacterial ribosomal protein bL17 family. As to quaternary structure, part of the 50S ribosomal subunit. Contacts protein L32.

In Ruegeria pomeroyi (strain ATCC 700808 / DSM 15171 / DSS-3) (Silicibacter pomeroyi), this protein is Large ribosomal subunit protein bL17.